Here is a 275-residue protein sequence, read N- to C-terminus: N-(5'-phosphoribosyl)anthranilate isomerase 1, chloroplastic (275 aa).

Residues 1–32 (MSTGISTDLHVHFGALNFSKTYKSGLSNRTVS) constitute a chloroplast transit peptide.

The protein belongs to the TrpF family. As to expression, expressed in roots and shoots.

It localises to the plastid. It is found in the chloroplast. The catalysed reaction is N-(5-phospho-beta-D-ribosyl)anthranilate = 1-(2-carboxyphenylamino)-1-deoxy-D-ribulose 5-phosphate. It functions in the pathway amino-acid biosynthesis; L-tryptophan biosynthesis; L-tryptophan from chorismate: step 3/5. Functionally, catalyzes the conversion of 5-phosphoribosylanthranilate to l-(O-carboxyphenylamino)-l-deoxyribulose-5-phosphate, which is the third step of the tryptophan biosynthetic pathway. This chain is N-(5'-phosphoribosyl)anthranilate isomerase 1, chloroplastic (PAI1), found in Arabidopsis thaliana (Mouse-ear cress).